The sequence spans 294 residues: Probable ABC transporter permease protein YqgI (294 aa).

The next 6 membrane-spanning stretches (helical) occupy residues 14–34 (FGLC…YIII), 66–86 (FYIL…GGVF), 99–121 (FIRT…FGLL), 126–148 (LTGW…LPVM), 190–210 (IITG…ALLF), and 260–280 (AIAN…NLAA). One can recognise an ABC transmembrane type-1 domain in the interval 62-280 (LFNSFYILFI…ISVLVFNLAA (219 aa)).

The protein belongs to the binding-protein-dependent transport system permease family. CysTW subfamily.

It is found in the cell membrane. In terms of biological role, part of the binding-protein-dependent transport system YqgGHIJK. Probably responsible for the translocation of the substrate across the membrane. The polypeptide is Probable ABC transporter permease protein YqgI (yqgI) (Bacillus subtilis (strain 168)).